We begin with the raw amino-acid sequence, 219 residues long: Large ribosomal subunit protein uL3 (219 aa).

This sequence belongs to the universal ribosomal protein uL3 family. As to quaternary structure, part of the 50S ribosomal subunit. Forms a cluster with proteins L14 and L19.

Functionally, one of the primary rRNA binding proteins, it binds directly near the 3'-end of the 23S rRNA, where it nucleates assembly of the 50S subunit. This is Large ribosomal subunit protein uL3 from Corynebacterium kroppenstedtii (strain DSM 44385 / JCM 11950 / CIP 105744 / CCUG 35717).